Here is a 180-residue protein sequence, read N- to C-terminus: Succinate dehydrogenase cytochrome B subunit, mitochondrial (180 aa).

Residues 1–82 lie on the Mitochondrial matrix side of the membrane; sequence MFATRSFCLS…WYLSSLHRIT (82 aa). The helical transmembrane segment at 83–103 threads the bilayer; sequence GCVVAGTLYAFAMGYLVAPLA. At 104-122 the chain is on the mitochondrial intermembrane side; sequence GYSLDTATISGLIQQVPTW. The chain crosses the membrane as a helical span at residues 123–143; it reads IKVPAKFVISYPLTFHIFNGI. Histidine 138 lines the heme pocket. Over 144–159 the chain is Mitochondrial matrix; sequence RHLIWDTTKELSLKGV. Residues 160–180 traverse the membrane as a helical segment; that stretch reads YRTGYAVLALSVLTSGYFAMI.

The protein belongs to the cytochrome b560 family. As to quaternary structure, forms part of complex II containing four subunits: a 70 kDa flavoprotein (FP), a 27 kDa iron-sulfur protein (IP), a cytochrome B and a membrane-anchoring protein. The cofactor is heme.

Its subcellular location is the mitochondrion inner membrane. The protein operates within carbohydrate metabolism; tricarboxylic acid cycle. Membrane-anchoring subunit of succinate dehydrogenase (SDH) that is involved in complex II of the mitochondrial electron transport chain and is responsible for transferring electrons from succinate to ubiquinone (coenzyme Q). The chain is Succinate dehydrogenase cytochrome B subunit, mitochondrial (sdh3) from Schizosaccharomyces pombe (strain 972 / ATCC 24843) (Fission yeast).